Here is a 417-residue protein sequence, read N- to C-terminus: Imidazolonepropionase (417 aa).

Fe(3+) contacts are provided by His80 and His82. 2 residues coordinate Zn(2+): His80 and His82. Positions 89, 152, and 187 each coordinate 4-imidazolone-5-propanoate. Tyr152 provides a ligand contact to N-formimidoyl-L-glutamate. Residue His252 participates in Fe(3+) binding. A Zn(2+)-binding site is contributed by His252. Glu255 contributes to the 4-imidazolone-5-propanoate binding site. A Fe(3+)-binding site is contributed by Asp326. Asp326 contacts Zn(2+). Asn328 and Gly330 together coordinate N-formimidoyl-L-glutamate. Ser331 contributes to the 4-imidazolone-5-propanoate binding site.

Belongs to the metallo-dependent hydrolases superfamily. HutI family. Zn(2+) is required as a cofactor. Requires Fe(3+) as cofactor.

It is found in the cytoplasm. It carries out the reaction 4-imidazolone-5-propanoate + H2O = N-formimidoyl-L-glutamate. It functions in the pathway amino-acid degradation; L-histidine degradation into L-glutamate; N-formimidoyl-L-glutamate from L-histidine: step 3/3. Its function is as follows. Catalyzes the hydrolytic cleavage of the carbon-nitrogen bond in imidazolone-5-propanoate to yield N-formimidoyl-L-glutamate. It is the third step in the universal histidine degradation pathway. The protein is Imidazolonepropionase of Bacteroides thetaiotaomicron (strain ATCC 29148 / DSM 2079 / JCM 5827 / CCUG 10774 / NCTC 10582 / VPI-5482 / E50).